The sequence spans 458 residues: GTPase Der (458 aa).

2 consecutive EngA-type G domains span residues 3–167 and 176–351; these read PVVV…PETE and IKLA…AQYT. Residues 9–16, 56–60, 119–122, 182–189, 229–233, and 294–297 each bind GTP; these read GRPNVGKS, DTGGF, NKID, DTAGL, and NKWD. The KH-like domain occupies 352 to 436; that stretch reads FNIKTGELNN…PIRLFFREKP (85 aa).

It belongs to the TRAFAC class TrmE-Era-EngA-EngB-Septin-like GTPase superfamily. EngA (Der) GTPase family. As to quaternary structure, associates with the 50S ribosomal subunit.

GTPase that plays an essential role in the late steps of ribosome biogenesis. This Desulfosudis oleivorans (strain DSM 6200 / JCM 39069 / Hxd3) (Desulfococcus oleovorans) protein is GTPase Der.